A 248-amino-acid chain; its full sequence is 3-deoxy-manno-octulosonate cytidylyltransferase (248 aa).

It belongs to the KdsB family.

It localises to the cytoplasm. The catalysed reaction is 3-deoxy-alpha-D-manno-oct-2-ulosonate + CTP = CMP-3-deoxy-beta-D-manno-octulosonate + diphosphate. The protein operates within nucleotide-sugar biosynthesis; CMP-3-deoxy-D-manno-octulosonate biosynthesis; CMP-3-deoxy-D-manno-octulosonate from 3-deoxy-D-manno-octulosonate and CTP: step 1/1. Its pathway is bacterial outer membrane biogenesis; lipopolysaccharide biosynthesis. Functionally, activates KDO (a required 8-carbon sugar) for incorporation into bacterial lipopolysaccharide in Gram-negative bacteria. The sequence is that of 3-deoxy-manno-octulosonate cytidylyltransferase from Citrobacter koseri (strain ATCC BAA-895 / CDC 4225-83 / SGSC4696).